The primary structure comprises 162 residues: uncharacterized protein (162 aa).

In terms of domain architecture, PUA spans 78-154 (KNLVVVDIGA…KAIKNLHYVG (77 aa)).

This is an uncharacterized protein from Methanocaldococcus jannaschii (strain ATCC 43067 / DSM 2661 / JAL-1 / JCM 10045 / NBRC 100440) (Methanococcus jannaschii).